The chain runs to 397 residues: Phosphoglycerate kinase (397 aa).

Substrate-binding positions include aspartate 21 to asparagine 23, arginine 37, histidine 60 to arginine 63, arginine 119, and arginine 152. ATP is bound by residues lysine 203, glycine 294, glutamate 325, and glycine 354–serine 357.

This sequence belongs to the phosphoglycerate kinase family. In terms of assembly, monomer.

The protein resides in the cytoplasm. It carries out the reaction (2R)-3-phosphoglycerate + ATP = (2R)-3-phospho-glyceroyl phosphate + ADP. The protein operates within carbohydrate degradation; glycolysis; pyruvate from D-glyceraldehyde 3-phosphate: step 2/5. This chain is Phosphoglycerate kinase, found in Chlorobium chlorochromatii (strain CaD3).